The primary structure comprises 83 residues: RNA-binding protein Hfq (83 aa).

In terms of domain architecture, Sm spans 10–70; that stretch reads DAFLNQVRKE…ISTVSPLKPV (61 aa).

The protein belongs to the Hfq family. As to quaternary structure, homohexamer.

RNA chaperone that binds small regulatory RNA (sRNAs) and mRNAs to facilitate mRNA translational regulation in response to envelope stress, environmental stress and changes in metabolite concentrations. Also binds with high specificity to tRNAs. This chain is RNA-binding protein Hfq, found in Pelotomaculum thermopropionicum (strain DSM 13744 / JCM 10971 / SI).